The following is a 470-amino-acid chain: uncharacterized protein (470 aa).

The first 24 residues, 1-24 (MKKLVGSLAAISVLSATGFSYVGY), serve as a signal peptide directing secretion.

This is an uncharacterized protein from Mycoplasma capricolum subsp. capricolum (strain California kid / ATCC 27343 / NCTC 10154).